A 453-amino-acid chain; its full sequence is o-phthalyl amidase (453 aa).

Monomer. In terms of processing, the N-terminus is blocked.

It catalyses the reaction a phtalamide + H2O = phthalate + a primary amine. Inhibited by iodoacetate, p-hydroxymercuric benzoate and copper ions. Its function is as follows. Catalyzes the removal of the phthalyl group from phthalyl amides generating phthalate and an amine. The enzyme has a broad substrate specificity and hydrolyzes phthalylated amino acids, peptides, beta-lactams, aromatic and aliphatic amines; substitutions allowed on the phthalyl group include 6-F, 6-NH(2), 3-OH, and a nitrogen in the aromatic ring ortho to the carboxy group attached to the amine. This Xanthobacter agilis protein is o-phthalyl amidase.